The following is a 351-amino-acid chain: Nicotinate-nucleotide--dimethylbenzimidazole phosphoribosyltransferase (351 aa).

Glu317 serves as the catalytic Proton acceptor.

It belongs to the CobT family.

The catalysed reaction is 5,6-dimethylbenzimidazole + nicotinate beta-D-ribonucleotide = alpha-ribazole 5'-phosphate + nicotinate + H(+). It participates in nucleoside biosynthesis; alpha-ribazole biosynthesis; alpha-ribazole from 5,6-dimethylbenzimidazole: step 1/2. In terms of biological role, catalyzes the synthesis of alpha-ribazole-5'-phosphate from nicotinate mononucleotide (NAMN) and 5,6-dimethylbenzimidazole (DMB). This chain is Nicotinate-nucleotide--dimethylbenzimidazole phosphoribosyltransferase, found in Pseudomonas fluorescens (strain ATCC BAA-477 / NRRL B-23932 / Pf-5).